Here is a 333-residue protein sequence, read N- to C-terminus: Transcription factor TGA2.2 (333 aa).

Residues 1 to 14 are compositionally biased toward polar residues; sequence MADASSRTDTSTVL. A disordered region spans residues 1-48; it reads MADASSRTDTSTVLDTDDKNQMVDGQSGAIVPSNSSDRSDRSDKPMDQ. Over residues 37-48 the composition is skewed to basic and acidic residues; it reads DRSDRSDKPMDQ. A bZIP domain is found at 47–91; the sequence is DQKVLRRLAQNREAARKSRLRKKAYVQQLESSKLKLASLEQEINK. Residues 49–69 form a basic motif region; sequence KVLRRLAQNREAARKSRLRKK. The leucine-zipper stretch occupies residues 75–89; the sequence is LESSKLKLASLEQEI. Positions 114-330 constitute a DOG1 domain; the sequence is AMTFDLEYAR…RALSSLWLAR (217 aa).

This sequence belongs to the bZIP family. Interacts with NPR1/NH1. Interacts with NPR3/NH3.

It is found in the nucleus. Transcriptional regulator involved in defense response. This chain is Transcription factor TGA2.2, found in Oryza sativa subsp. japonica (Rice).